The primary structure comprises 494 residues: Alpha-amylase-related protein (494 aa).

The N-terminal stretch at 1–20 (MFKFTFALALCVLAAGLVLA) is a signal peptide. Glutamine 21 bears the Pyrrolidone carboxylic acid mark. Cysteines 48 and 104 form a disulfide. Residues asparagine 118, glutamine 169, and aspartate 178 each coordinate Ca(2+). A disulfide bridge connects residues cysteine 157 and cysteine 171. Chloride is bound at residue arginine 206. The active-site Nucleophile is the aspartate 208. Histidine 212 provides a ligand contact to Ca(2+). The active-site Proton donor is glutamate 245. 2 residues coordinate chloride: asparagine 308 and arginine 343. Disulfide bonds link cysteine 376–cysteine 382, cysteine 418–cysteine 441, and cysteine 448–cysteine 460.

It belongs to the glycosyl hydrolase 13 family. Monomer. The cofactor is Ca(2+). It depends on chloride as a cofactor.

Its subcellular location is the secreted. It catalyses the reaction Endohydrolysis of (1-&gt;4)-alpha-D-glucosidic linkages in polysaccharides containing three or more (1-&gt;4)-alpha-linked D-glucose units.. This chain is Alpha-amylase-related protein (Amyrel), found in Drosophila pseudoobscura pseudoobscura (Fruit fly).